A 132-amino-acid polypeptide reads, in one-letter code: Homeobox protein HD-4 (132 aa).

The homeobox DNA-binding region spans 29-88 (GLSGYRYKTHIQVYVLTKIFEITQYPSHDTRQNLAILLNMSPRTIQIWFQNSRSVSRGAA). The interval 82–101 (SVSRGAAKKKVSKDNGPQEA) is disordered.

Its subcellular location is the nucleus. The sequence is that of Homeobox protein HD-4 (HD-4) from Encephalitozoon cuniculi (strain GB-M1) (Microsporidian parasite).